The primary structure comprises 328 residues: Protein chibby homolog 2 (328 aa).

The disordered stretch occupies residues 180–231 (NKGASSVQKDTENTTAAGEGSLGPTCQEEHDAKEESTTPTQNDTKIAPSTED). Positions 182 to 195 (GASSVQKDTENTTA) are enriched in polar residues. Residues 206 to 215 (QEEHDAKEES) are compositionally biased toward basic and acidic residues. Residues 259 to 307 (RESLHALQDESKFFQEEYKKLKLQLNNVKNTVSDITTQMEMLEKELIAI) are a coiled coil.

This sequence belongs to the chibby family. SPERT subfamily.

The polypeptide is Protein chibby homolog 2 (CBY2) (Gallus gallus (Chicken)).